The following is a 231-amino-acid chain: UPF0758 protein pc1765 (231 aa).

Residues Leu107–Leu229 form the MPN domain. Zn(2+)-binding residues include His178, His180, and Asp191. Positions His178 to Asp191 match the JAMM motif motif.

The protein belongs to the UPF0758 family.

The polypeptide is UPF0758 protein pc1765 (Protochlamydia amoebophila (strain UWE25)).